Reading from the N-terminus, the 539-residue chain is Cytochrome P450 monooxygenase buaD (539 aa).

The N-terminal stretch at 1–16 (MLVPVLTLLGTLTATG) is a signal peptide. N-linked (GlcNAc...) asparagine glycosylation is present at N120. C478 provides a ligand contact to heme. N-linked (GlcNAc...) asparagine glycosylation is present at N520.

Belongs to the cytochrome P450 family. Requires heme as cofactor.

It functions in the pathway mycotoxin biosynthesis. Functionally, cytochrome P450 monooxygenase; part of the gene cluster that mediates the biosynthesis of burnettramic acids, an unusual class of bolaamphiphilic pyrrolizidinediones that display potent antibacterial, antifungal, and cytotoxic activities. The first step of the biosynthesis of burnettramic acids is the hydroxylation of proline by the proline hydroxylase buaE to generate 4-hydroxyproline. The PKS-NRPS buaA and trans-enoyl reductase buaC construct the highly reduced polyketide chain, and the condensation (C) domain of buaA then catalyzes the amide bond formation with the activated 4-hydroxyproline. This is followed by the R domain releasing the nascent polyketide-peptide directly via a Dieckmann condensation to afford a tetramic acid fused to the hydroxyproline, generating the bicyclic pyrrolidinedione moiety. The cytochrome P450 monooxygenases buaD and buaG are likely responsible for the multiple hydroxylations on the polyketide chain and its terminus, although in the heterologous context, buaD does not appear to be required. Therefore, while buaG may be a multifunctional cytochrome P450 monooxygenase, it cannot be ruled out that the two secondary alcohols on the polyketide chain could have an acetate origin. Finally, the glycosyltransferase buaB transfers beta-D-mannose to the aglycone burnettramic acid A to form burnettramic acid A. Burnettramic acid B is a minor cis-pyrrolizidine epimer of burnettramic acid A and it is likely that small amounts of it form naturally in acidic environments. The protein is Cytochrome P450 monooxygenase buaD of Petromyces alliaceus (Aspergillus alliaceus).